A 662-amino-acid chain; its full sequence is UvrABC system protein B (662 aa).

Residues 25–412 form the Helicase ATP-binding domain; that stretch reads EGIEKGLKMQ…SQKIVEQIIR (388 aa). Position 38 to 45 (38 to 45) interacts with ATP; the sequence is GVTGSGKT. The Beta-hairpin signature appears at 91–114; the sequence is YYDYYQPEAYLPATDTYIEKDSAI. One can recognise a Helicase C-terminal domain in the interval 429–595; that stretch reads QVDDLYGEIK…TVQKAVRDVI (167 aa). Positions 622–657 constitute a UVR domain; sequence KQYVEKLTREMKEAAKALEFEKAAMLRDLIIELRAQ.

Belongs to the UvrB family. As to quaternary structure, forms a heterotetramer with UvrA during the search for lesions. Interacts with UvrC in an incision complex.

The protein resides in the cytoplasm. Functionally, the UvrABC repair system catalyzes the recognition and processing of DNA lesions. A damage recognition complex composed of 2 UvrA and 2 UvrB subunits scans DNA for abnormalities. Upon binding of the UvrA(2)B(2) complex to a putative damaged site, the DNA wraps around one UvrB monomer. DNA wrap is dependent on ATP binding by UvrB and probably causes local melting of the DNA helix, facilitating insertion of UvrB beta-hairpin between the DNA strands. Then UvrB probes one DNA strand for the presence of a lesion. If a lesion is found the UvrA subunits dissociate and the UvrB-DNA preincision complex is formed. This complex is subsequently bound by UvrC and the second UvrB is released. If no lesion is found, the DNA wraps around the other UvrB subunit that will check the other stand for damage. The protein is UvrABC system protein B of Carboxydothermus hydrogenoformans (strain ATCC BAA-161 / DSM 6008 / Z-2901).